Consider the following 452-residue polypeptide: Cobyrinate a,c-diamide synthase (452 aa).

The 194-residue stretch at 248–441 (RVAYALDAAF…LHIHFYQNLA (194 aa)) folds into the GATase cobBQ-type domain. Cysteine 330 serves as the catalytic Nucleophile.

It belongs to the CobB/CbiA family. Mg(2+) serves as cofactor.

It carries out the reaction cob(II)yrinate + 2 L-glutamine + 2 ATP + 2 H2O = cob(II)yrinate a,c diamide + 2 L-glutamate + 2 ADP + 2 phosphate + 2 H(+). It participates in cofactor biosynthesis; adenosylcobalamin biosynthesis; cob(II)yrinate a,c-diamide from sirohydrochlorin (anaerobic route): step 10/10. In terms of biological role, catalyzes the ATP-dependent amidation of the two carboxylate groups at positions a and c of cobyrinate, using either L-glutamine or ammonia as the nitrogen source. This is Cobyrinate a,c-diamide synthase from Listeria monocytogenes serovar 1/2a (strain ATCC BAA-679 / EGD-e).